The primary structure comprises 212 residues: Large ribosomal subunit protein uL1 (212 aa).

The protein belongs to the universal ribosomal protein uL1 family. In terms of assembly, part of the 50S ribosomal subunit.

Binds directly to 23S rRNA. Probably involved in E site tRNA release. In terms of biological role, protein L1 is also a translational repressor protein, it controls the translation of its operon by binding to its mRNA. This chain is Large ribosomal subunit protein uL1, found in Haloferax volcanii (strain ATCC 29605 / DSM 3757 / JCM 8879 / NBRC 14742 / NCIMB 2012 / VKM B-1768 / DS2) (Halobacterium volcanii).